A 140-amino-acid polypeptide reads, in one-letter code: Ribosome-binding factor A (140 aa).

The span at 1–13 (MQKKSSSKSHRAT) shows a compositional bias: basic residues. Positions 1–22 (MQKKSSSKSHRATRGPSQRQLR) are disordered.

It belongs to the RbfA family. As to quaternary structure, monomer. Binds 30S ribosomal subunits, but not 50S ribosomal subunits or 70S ribosomes.

It localises to the cytoplasm. Its function is as follows. One of several proteins that assist in the late maturation steps of the functional core of the 30S ribosomal subunit. Associates with free 30S ribosomal subunits (but not with 30S subunits that are part of 70S ribosomes or polysomes). Required for efficient processing of 16S rRNA. May interact with the 5'-terminal helix region of 16S rRNA. This chain is Ribosome-binding factor A, found in Parvibaculum lavamentivorans (strain DS-1 / DSM 13023 / NCIMB 13966).